We begin with the raw amino-acid sequence, 475 residues long: ATP synthase subunit beta 1 (475 aa).

Residue 153-160 coordinates ATP; that stretch reads GGAGVGKT.

It belongs to the ATPase alpha/beta chains family. F-type ATPases have 2 components, CF(1) - the catalytic core - and CF(0) - the membrane proton channel. CF(1) has five subunits: alpha(3), beta(3), gamma(1), delta(1), epsilon(1). CF(0) has three main subunits: a(1), b(2) and c(9-12). The alpha and beta chains form an alternating ring which encloses part of the gamma chain. CF(1) is attached to CF(0) by a central stalk formed by the gamma and epsilon chains, while a peripheral stalk is formed by the delta and b chains.

Its subcellular location is the cell membrane. It carries out the reaction ATP + H2O + 4 H(+)(in) = ADP + phosphate + 5 H(+)(out). Functionally, produces ATP from ADP in the presence of a proton gradient across the membrane. The catalytic sites are hosted primarily by the beta subunits. The polypeptide is ATP synthase subunit beta 1 (Mycoplasmopsis pulmonis (strain UAB CTIP) (Mycoplasma pulmonis)).